Consider the following 388-residue polypeptide: Phosphopentomutase (388 aa).

Mn(2+)-binding residues include aspartate 11, aspartate 283, histidine 288, aspartate 324, histidine 325, and histidine 336.

It belongs to the phosphopentomutase family. It depends on Mn(2+) as a cofactor.

Its subcellular location is the cytoplasm. It catalyses the reaction 2-deoxy-alpha-D-ribose 1-phosphate = 2-deoxy-D-ribose 5-phosphate. The catalysed reaction is alpha-D-ribose 1-phosphate = D-ribose 5-phosphate. Its pathway is carbohydrate degradation; 2-deoxy-D-ribose 1-phosphate degradation; D-glyceraldehyde 3-phosphate and acetaldehyde from 2-deoxy-alpha-D-ribose 1-phosphate: step 1/2. Functionally, isomerase that catalyzes the conversion of deoxy-ribose 1-phosphate (dRib-1-P) and ribose 1-phosphate (Rib-1-P) to deoxy-ribose 5-phosphate (dRib-5-P) and ribose 5-phosphate (Rib-5-P), respectively. This is Phosphopentomutase from Enterococcus faecalis (strain ATCC 700802 / V583).